Consider the following 126-residue polypeptide: Large ribosomal subunit protein bL20 (126 aa).

The protein belongs to the bacterial ribosomal protein bL20 family.

Its function is as follows. Binds directly to 23S ribosomal RNA and is necessary for the in vitro assembly process of the 50S ribosomal subunit. It is not involved in the protein synthesizing functions of that subunit. The polypeptide is Large ribosomal subunit protein bL20 (Buchnera aphidicola subsp. Baizongia pistaciae (strain Bp)).